Here is a 236-residue protein sequence, read N- to C-terminus: Phosphoribosylaminoimidazole-succinocarboxamide synthase (236 aa).

Belongs to the SAICAR synthetase family.

The catalysed reaction is 5-amino-1-(5-phospho-D-ribosyl)imidazole-4-carboxylate + L-aspartate + ATP = (2S)-2-[5-amino-1-(5-phospho-beta-D-ribosyl)imidazole-4-carboxamido]succinate + ADP + phosphate + 2 H(+). Its pathway is purine metabolism; IMP biosynthesis via de novo pathway; 5-amino-1-(5-phospho-D-ribosyl)imidazole-4-carboxamide from 5-amino-1-(5-phospho-D-ribosyl)imidazole-4-carboxylate: step 1/2. The chain is Phosphoribosylaminoimidazole-succinocarboxamide synthase from Pseudomonas savastanoi pv. phaseolicola (strain 1448A / Race 6) (Pseudomonas syringae pv. phaseolicola (strain 1448A / Race 6)).